Reading from the N-terminus, the 2060-residue chain is Unconventional myosin-X (2060 aa).

Position 1 is an N-acetylmethionine (M1). The Myosin motor domain occupies 63-739; it reads EGVDDMASLT…LEQKLEKRRE (677 aa). Residues N104, Y113, 160-165, and N215 each bind ATP; that span reads GAGKTE. Residues 619–641 are actin-binding; sequence LHSLMATLSSSNPFFVRCIKPNT. 3 consecutive IQ domains span residues 742 to 771, 765 to 794, and 788 to 817; these read IDRAAMVIRAHILGYLARKQYRKVLCGVVT, VLCGVVTIQKNYRAFLARKRFLHLKKAAIV, and LKKAAIVFQKQLRGRLARKVYRQLLAEKRE. The segment at 814–882 is SAH; it reads EKRELEERKR…LTRELEKQRE (69 aa). Positions 883 to 933 form a coiled coil; it reads NKQVEEILRLEKEIEDLQRMKEQQELSLTEASLQKLQQLRDEELRRLEDEA. 3 positions are modified to phosphoserine: S961, S964, and S967. 2 disordered regions span residues 971-1039 and 1064-1088; these read SELA…PYMN and SLHNSSSGESTYCMPQNNGDLPSPD. Acidic residues predominate over residues 991–1005; the sequence is PEEEVDEGFEADDDA. The segment covering 1064–1083 has biased composition (polar residues); it reads SLHNSSSGESTYCMPQNNGD. T1160 is subject to Phosphothreonine. 2 PH domains span residues 1214 to 1312 and 1394 to 1499; these read EALK…QVHS and EFIV…NVTD. The 149-residue stretch at 1549-1697 folds into the MyTH4 domain; it reads LPYGDINLNL…PSRDEIEALI (149 aa). The 345-residue stretch at 1702-2046 folds into the FERM domain; it reads MTSTVYCHGG…AYISMIVKKR (345 aa).

Belongs to the TRAFAC class myosin-kinesin ATPase superfamily. Myosin family. In terms of assembly, monomer, when in an inactive conformation in the cytosol. Homodimer in its active, membrane-bound conformation; antiparallel coiled coil-mediated dimer formation. Interacts with ECPAS. Interacts with DCC and ITGB5; the presence of DCC inhibits ITGB5 binding. Interacts with tubulin; ITGB5 or DCC binding inhibits tubulin binding. Interacts strongly with CALM3 and weakly with CALM, the CALM3 interaction is essential for function in filopodial extension and motility. Interacts with ITGB1, ITGB3 and ITGB5. Interacts with NEO1. Interacts with VASP.

The protein localises to the cytoplasm. Its subcellular location is the cytosol. It is found in the cell projection. The protein resides in the lamellipodium. It localises to the ruffle. The protein localises to the cytoskeleton. Its subcellular location is the filopodium tip. It is found in the cell cortex. The protein resides in the filopodium membrane. It localises to the cell membrane. Its function is as follows. Myosins are actin-based motor molecules with ATPase activity. Unconventional myosins serve in intracellular movements. MYO10 binds to actin filaments and actin bundles and functions as a plus end-directed motor. Moves with higher velocity and takes larger steps on actin bundles than on single actin filaments. The tail domain binds to membranous compartments containing phosphatidylinositol 3,4,5-trisphosphate or integrins, and mediates cargo transport along actin filaments. Regulates cell shape, cell spreading and cell adhesion. Stimulates the formation and elongation of filopodia. In hippocampal neurons it induces the formation of dendritic filopodia by trafficking the actin-remodeling protein VASP to the tips of filopodia, where it promotes actin elongation. Plays a role in formation of the podosome belt in osteoclasts. This is Unconventional myosin-X (Myo10) from Rattus norvegicus (Rat).